The chain runs to 153 residues: Pheromone-binding protein Gp-9 (153 aa).

The first 19 residues, 1-19, serve as a signal peptide directing secretion; sequence MKTFVLHIFIFALVAFASA. 3 cysteine pairs are disulfide-bonded: Cys-37–Cys-77, Cys-73–Cys-129, and Cys-118–Cys-138.

Belongs to the PBP/GOBP family. As to quaternary structure, homodimer.

It is found in the secreted. Its function is as follows. Colony queen number, a major feature of social organization, is associated with worker genotype for Gp-9. Colonies are headed by either a single reproductive queen (monogyne form) or multiple queens (polygyne form). Differences in worker Gp-9 genotypes between social forms may cause differences in workers' abilities to recognize queens and regulate their numbers. In Solenopsis substituta (Fire ant), this protein is Pheromone-binding protein Gp-9.